Consider the following 376-residue polypeptide: MASWDIFCSVVDNYGDIGVTWRLARQLAAEHGQAVRLWVDEPQAFARICPRADPVAHVQCLDGVEVRAWGRPWAPVAAADVVIEAFACELPEAHRQAMRERKRPSLWLNLEYLSAEEWIGSCHALPSLQACGLSKYFFFPGFREPSGGLLREAGLLERRRRFQASVSAQDEFLASLGVRRKVGERLISLFAYENPALPGWLEQLRDARQPSLLLVPEGRVLADVADWLRVATLAVGDVHVRDALRVQVLPFMAQDDYDRLLWCCDLNAVRGEDSFVRAQWAGRPLLWHIYRQEEETHLAKLEAFLELYCAGLPADLAENLRTFWLAWNAGGGLAGAWEGLERQLPEWRREAQRWADEQGMRPDLAARLVQFYADWL.

Residues Asn13 to Asp16, Tyr192, Met252 to Gln254, and Arg270 to Ser274 contribute to the dTDP-beta-L-rhamnose site. A dTDP-binding site is contributed by Tyr14–Gly15. Asp16 functions as the Proton acceptor in the catalytic mechanism. DTDP-binding positions include Tyr192, Met252 to Gln254, and Arg270 to Ser274. The active site involves Glu272.

Belongs to the glycosyltransferase 104 family.

The enzyme catalyses dTDP-beta-L-rhamnose + L-arginyl-[protein] = N(omega)-(alpha-L-rhamnosyl)-L-arginyl-[protein] + dTDP + H(+). Its function is as follows. Protein-arginine rhamnosyltransferase that catalyzes the transfer of a single rhamnose to elongation factor P (EF-P) on 'Lys-32', a modification required for EF-P-dependent rescue of polyproline stalled ribosomes. The sequence is that of Protein-arginine rhamnosyltransferase from Pseudomonas aeruginosa (strain ATCC 15692 / DSM 22644 / CIP 104116 / JCM 14847 / LMG 12228 / 1C / PRS 101 / PAO1).